The chain runs to 103 residues: Enhancer of rudimentary homolog (103 aa).

It belongs to the E(R) family. In terms of assembly, homodimer.

May have a role in the cell cycle. This Caenorhabditis elegans protein is Enhancer of rudimentary homolog.